The following is a 282-amino-acid chain: MSQPVERSPASTRTVFFVSDGTGITAETFGHSVLTQFELRFKQVRLPFIDTPDKAYDALRKINETFAADGQRPIIFSTLVKADLSSIVRQSQGMHMDLIQTFVEPLEQELGVKSTHTIGRSHTSTDSEEYKNRIEAINFSLAHDDGQSHKNLSAADVILVGVSRSGKTPTSLFLAMQYGIKAANYPLIPDDFEREKLPGGLQAYKHKIFGLSIAADRLAEIRNERLPGSKYAALENCRYEVNEAERMMRREGIRWMSSTTKSIEEIAATILQEIKLDPPIKD.

Residue 161-168 (GVSRSGKT) coordinates ADP.

It belongs to the pyruvate, phosphate/water dikinase regulatory protein family. PSRP subfamily.

The catalysed reaction is [pyruvate, water dikinase] + ADP = [pyruvate, water dikinase]-phosphate + AMP + H(+). It carries out the reaction [pyruvate, water dikinase]-phosphate + phosphate + H(+) = [pyruvate, water dikinase] + diphosphate. Bifunctional serine/threonine kinase and phosphorylase involved in the regulation of the phosphoenolpyruvate synthase (PEPS) by catalyzing its phosphorylation/dephosphorylation. The protein is Putative phosphoenolpyruvate synthase regulatory protein of Janthinobacterium sp. (strain Marseille) (Minibacterium massiliensis).